Consider the following 461-residue polypeptide: CBL-interacting protein kinase 1 (461 aa).

Residues 19-274 enclose the Protein kinase domain; sequence YEIGRTLGEG…IAGIKEHEWF (256 aa). Residues 25–33 and Lys48 each bind ATP; that span reads LGEGNFGKV. The active-site Proton acceptor is the Asp142. An activation loop region spans residues 160 to 189; it reads DFGLSALPQHLGNDGLLHTTCGSPNYIAPE. The NAF domain maps to 308 to 332; the sequence is EKPTHINAFQLIGMASALDLSGFFE. The tract at residues 338–367 is PPI; it reads QRKIRFTSTHSPKDLFDKIENVVTEMGFQV.

It belongs to the protein kinase superfamily. CAMK Ser/Thr protein kinase family. SNF1 subfamily. It depends on Mn(2+) as a cofactor.

The enzyme catalyses L-seryl-[protein] + ATP = O-phospho-L-seryl-[protein] + ADP + H(+). It carries out the reaction L-threonyl-[protein] + ATP = O-phospho-L-threonyl-[protein] + ADP + H(+). Functionally, CIPK serine-threonine protein kinases interact with CBL proteins. Binding of a CBL protein to the regulatory NAF domain of CIPK protein lead to the activation of the kinase in a calcium-dependent manner. The protein is CBL-interacting protein kinase 1 (CIPK1) of Oryza sativa subsp. japonica (Rice).